A 308-amino-acid polypeptide reads, in one-letter code: MSIRERRLISWTPRRIRTTFLAYLALTKPRVIELLLVTTIPAMLLADRGTVDPLLILNTLVGGMLAAAGANTLNCVADADIDKVMKRTARRPLARATVPTRHALIFGLVLTVTSFCWLWLSTNLLSGLLAVATIAFYVFVYTMLLKRRTSQNVVWGGAAGCMPVMIGWSAVTGTIQWPALVMFLIIFFWTPPHTWALAMRYKDDYKAAGVPMLPAVATERQVTRQILIYTWLTVLTTLVLALATGWLYGAVALLAGAWFLVMAHQLYSGVKRGEPVKPLRLFLQSNNYLAVVFCALAIDSALALPTLL.

The next 8 membrane-spanning stretches (helical) occupy residues 31–51, 53–73, 102–122, 124–144, 149–169, 170–190, 242–262, and 288–308; these read VIEL…RGTV, PLLI…ANTL, HALI…WLST, LLSG…YTML, TSQN…IGWS, AVTG…FFWT, LATG…FLVM, and YLAV…PTLL.

This sequence belongs to the UbiA prenyltransferase family. Protoheme IX farnesyltransferase subfamily.

It is found in the cell membrane. The catalysed reaction is heme b + (2E,6E)-farnesyl diphosphate + H2O = Fe(II)-heme o + diphosphate. It participates in porphyrin-containing compound metabolism; heme O biosynthesis; heme O from protoheme: step 1/1. Its function is as follows. Converts heme B (protoheme IX) to heme O by substitution of the vinyl group on carbon 2 of heme B porphyrin ring with a hydroxyethyl farnesyl side group. The sequence is that of Protoheme IX farnesyltransferase from Mycolicibacterium smegmatis (strain ATCC 700084 / mc(2)155) (Mycobacterium smegmatis).